The following is an 864-amino-acid chain: Probable M1 family aminopeptidase 2 (864 aa).

Substrate is bound by residues glutamate 149 and 289–293; that span reads GAMEN. Residue histidine 325 coordinates Zn(2+). The active-site Proton acceptor is the glutamate 326. The Zn(2+) site is built by histidine 329 and glutamate 348.

The protein belongs to the peptidase M1 family. Zn(2+) is required as a cofactor.

The polypeptide is Probable M1 family aminopeptidase 2 (Encephalitozoon cuniculi (strain GB-M1) (Microsporidian parasite)).